Here is a 548-residue protein sequence, read N- to C-terminus: Probable inorganic phosphate transporter 1-5 (548 aa).

Residues 1 to 23 lie on the Cytoplasmic side of the membrane; it reads MVQDRKVLDALDTAKTQWYHFTA. Residues 24 to 44 traverse the membrane as a helical segment; that stretch reads VVIAGMGFFTDAYDLFSISLV. The Extracellular segment spans residues 45 to 69; it reads TKLLGRIYYFNPASKSPGSLPPNVS. Residues 70 to 90 form a helical membrane-spanning segment; the sequence is AAVNGVAFCGTLAGQLFFGWL. The Cytoplasmic portion of the chain corresponds to 91 to 98; it reads GDKMGRKK. The chain crosses the membrane as a helical span at residues 99-119; it reads VYGMTLMLMVICCLASGLSFG. Over 120-123 the chain is Extracellular; that stretch reads SSAK. A helical transmembrane segment spans residues 124 to 144; that stretch reads GVMATLCFFRFWLGFGIGGDY. Over 145–163 the chain is Cytoplasmic; that stretch reads PLSATIMSEYANKRTRGAF. The chain crosses the membrane as a helical span at residues 164–184; that stretch reads IAAVFAMQGFGNLTGGIVAII. Over 185-210 the chain is Extracellular; it reads VSAAFKLRFDAPAYRDDRAGSTVPQA. A helical transmembrane segment spans residues 211–231; the sequence is DYAWRIVLMFGAIPALLTYYW. At 232–303 the chain is on the cytoplasmic side; it reads RMKMPETARY…REFARRHGHH (72 aa). The helical transmembrane segment at 304 to 324 threads the bilayer; it reads LLGTTVCWFVLDIAYYSQNLF. At 325–355 the chain is on the extracellular side; sequence QKDIYTAVQWLPKADTMSALEEMFKISRAQT. Residues 356 to 376 form a helical membrane-spanning segment; it reads LVALCGTIPGYWFTVLFIDIV. Topologically, residues 377–378 are cytoplasmic; the sequence is GR. The helical transmembrane segment at 379–399 threads the bilayer; the sequence is FAIQLGGFFLMTAFMLGLAVP. Over 400–405 the chain is Extracellular; it reads YHHWTT. A helical transmembrane segment spans residues 406-426; it reads PGNHVGFVVMYAFTFFFANFG. Residues 427–449 are Cytoplasmic-facing; the sequence is PNSTTFIVPAEIFPARLRSTCHG. Residues 450–470 traverse the membrane as a helical segment; the sequence is ISSAAGKMGAIVGSFGFLYAA. Topologically, residues 471 to 490 are extracellular; the sequence is QSTDPSKTDAGYPRGIGVRN. The helical transmembrane segment at 491 to 511 threads the bilayer; that stretch reads SLFLLAGCNVVGFLFTFLVPE. Residues 512-548 are Cytoplasmic-facing; that stretch reads SKGKSLEELSGENEMEAEPAAATNSYRQTVPDSGQSE. Residues 518-548 are disordered; it reads EELSGENEMEAEPAAATNSYRQTVPDSGQSE. Residues 533-548 are compositionally biased toward polar residues; it reads ATNSYRQTVPDSGQSE.

The protein belongs to the major facilitator superfamily. Phosphate:H(+) symporter (TC 2.A.1.9) family. Expressed at low levels in roots.

It is found in the membrane. Functionally, high-affinity transporter for external inorganic phosphate. The sequence is that of Probable inorganic phosphate transporter 1-5 (PHT1-5) from Oryza sativa subsp. japonica (Rice).